The primary structure comprises 156 residues: ATP synthase subunit b (156 aa).

A helical membrane pass occupies residues 7–29 (LFAQMVVFLVLAWFTMKFVWPPL).

It belongs to the ATPase B chain family. As to quaternary structure, F-type ATPases have 2 components, F(1) - the catalytic core - and F(0) - the membrane proton channel. F(1) has five subunits: alpha(3), beta(3), gamma(1), delta(1), epsilon(1). F(0) has three main subunits: a(1), b(2) and c(10-14). The alpha and beta chains form an alternating ring which encloses part of the gamma chain. F(1) is attached to F(0) by a central stalk formed by the gamma and epsilon chains, while a peripheral stalk is formed by the delta and b chains.

Its subcellular location is the cell inner membrane. In terms of biological role, f(1)F(0) ATP synthase produces ATP from ADP in the presence of a proton or sodium gradient. F-type ATPases consist of two structural domains, F(1) containing the extramembraneous catalytic core and F(0) containing the membrane proton channel, linked together by a central stalk and a peripheral stalk. During catalysis, ATP synthesis in the catalytic domain of F(1) is coupled via a rotary mechanism of the central stalk subunits to proton translocation. Its function is as follows. Component of the F(0) channel, it forms part of the peripheral stalk, linking F(1) to F(0). This is ATP synthase subunit b from Burkholderia vietnamiensis (strain G4 / LMG 22486) (Burkholderia cepacia (strain R1808)).